The sequence spans 140 residues: Organic hydroperoxide resistance protein-like (140 aa).

It belongs to the OsmC/Ohr family.

This is Organic hydroperoxide resistance protein-like from Staphylococcus aureus (strain MRSA252).